We begin with the raw amino-acid sequence, 569 residues long: Proline--tRNA ligase (569 aa).

The protein belongs to the class-II aminoacyl-tRNA synthetase family. ProS type 1 subfamily. As to quaternary structure, homodimer.

It localises to the cytoplasm. The catalysed reaction is tRNA(Pro) + L-proline + ATP = L-prolyl-tRNA(Pro) + AMP + diphosphate. In terms of biological role, catalyzes the attachment of proline to tRNA(Pro) in a two-step reaction: proline is first activated by ATP to form Pro-AMP and then transferred to the acceptor end of tRNA(Pro). As ProRS can inadvertently accommodate and process non-cognate amino acids such as alanine and cysteine, to avoid such errors it has two additional distinct editing activities against alanine. One activity is designated as 'pretransfer' editing and involves the tRNA(Pro)-independent hydrolysis of activated Ala-AMP. The other activity is designated 'posttransfer' editing and involves deacylation of mischarged Ala-tRNA(Pro). The misacylated Cys-tRNA(Pro) is not edited by ProRS. This is Proline--tRNA ligase from Campylobacter jejuni subsp. jejuni serotype O:2 (strain ATCC 700819 / NCTC 11168).